The sequence spans 33 residues: uncharacterized protein (33 aa).

The segment at 1-33 (MGSVIKKRRKRMSKKKHRKLLRRTRVQRRKLGK) is disordered.

This is an uncharacterized protein from Mycobacterium tuberculosis (strain CDC 1551 / Oshkosh).